Reading from the N-terminus, the 791-residue chain is MPVPWFLLSLALGRSPVVLSLERLVGPQDATHCSPVSLEPWGDEERLRVQFLAQQSLSLAPVTAATARTALSGLSGADGRREERGRGKSWVCLSLGGSGNTEPQKKGLSCRLWDSDILCLPGDIVPAPGPVLAPTHLQTELVLRCQKETDCDLCLRVAVHLAVHGHWEEPEDEEKFGGAADSGVEEPRNASLQAQVVLSFQAYPTARCVLLEVQVPAALVQFGQSVGSVVYDCFEAALGSEVRIWSYTQPRYEKELNHTQQLPDCRGLEVWNSIPSCWALPWLNVSADGDNVHLVLNVSEEQHFGLSLYWNQVQGPPKPRWHKNLTGPQIITLNHTDLVPCLCIQVWPLEPDSVRTNICPFREDPRAHQNLWQAARLQLLTLQSWLLDAPCSLPAEAALCWRAPGGDPCQPLVPPLSWENVTVDKVLEFPLLKGHPNLCVQVNSSEKLQLQECLWADSLGPLKDDVLLLETRGPQDNRSLCALEPSGCTSLPSKASTRAARLGEYLLQDLQSGQCLQLWDDDLGALWACPMDKYIHKRWALVWLACLLFAAALSLILLLKKDHAKGWLRLLKQDVRSGAAARGRAALLLYSADDSGFERLVGALASALCQLPLRVAVDLWSRRELSAQGPVAWFHAQRRQTLQEGGVVVLLFSPGAVALCSEWLQDGVSGPGAHGPHDAFRASLSCVLPDFLQGRAPGSYVGACFDRLLHPDAVPALFRTVPVFTLPSQLPDFLGALQQPRAPRSGRLQERAEQVSRALQPALDSYFHPPGTPAPGRGVGPGAGPGAGDGT.

A signal peptide spans 1-20 (MPVPWFLLSLALGRSPVVLS). Residues 21-538 (LERLVGPQDA…CPMDKYIHKR (518 aa)) are Extracellular-facing. N189 and N257 each carry an N-linked (GlcNAc...) asparagine glycan. A disulfide bridge links C265 with C277. N-linked (GlcNAc...) asparagine glycans are attached at residues N284, N297, N324, and N334. Intrachain disulfides connect C341–C391, C343–C359, and C400–C409. N420, N443, and N477 each carry an N-linked (GlcNAc...) asparagine glycan. A disulfide bond links C439 and C453. Disulfide bonds link C481–C488 and C515–C529. A helical membrane pass occupies residues 539-559 (WALVWLACLLFAAALSLILLL). Over 560–791 (KKDHAKGWLR…GAGPGAGDGT (232 aa)) the chain is Cytoplasmic. Residues 583–735 (GRAALLLYSA…LPSQLPDFLG (153 aa)) form the SEFIR domain. Positions 762 to 791 (ALDSYFHPPGTPAPGRGVGPGAGPGAGDGT) are disordered. A compositionally biased stretch (gly residues) spans 777–791 (RGVGPGAGPGAGDGT).

Homodimer; disulfide-linked. Heterodimer with IL17RA. Heterodimerization with IL17RA is independent of the cytoplasmic tail. Associates with non-glycosylated IL17RA constitutively. Binding of IL17A and IL17F induces association with glycosylated IL17RA. Forms complexes with 2:1 binding stoichiometry: two receptor chains for one interleukin molecule. IL17A homodimer preferentially drives the formation of IL17RA-IL17RC heterodimeric receptor complex, whereas IL17F homodimer forms predominantly complexes with IL17RC homodimer. IL17A-IL17F forms complexes with IL17RA-IL17RC, but with lower affinity when compared to IL17A homodimer. IL17RC chain cannot distinguish between IL17A and IL17F molecules, potentially enabling the formation of topologically distinct complexes. Interacts (through SEFIR domain and extended downstream region) with TRAF3IP2/ACT1 (phosphorylated). As to expression, expressed in prostate, skeletal muscle, kidney and placenta (at protein level). Expressed in brain, cartilage, colon, heart, intestine, kidney, liver, lung, muscle, placenta, and prostate. Also detected in thyroid, trachea and adrenal gland. Low expression in thymus and leukocytes.

It is found in the cell membrane. Receptor for IL17A and IL17F, major effector cytokines of innate and adaptive immune system involved in antimicrobial host defense and maintenance of tissue integrity. Receptor for IL17A and IL17F, major effector cytokines of innate and adaptive immune system involved in antimicrobial host defense and maintenance of tissue integrity. Receptor for IL17A and IL17F homodimers as part of a heterodimeric complex with IL17RA. Receptor for the heterodimer formed by IL17A and IL17B as part of a heterodimeric complex with IL17RA. Has also been shown to be the cognate receptor for IL17F and to bind IL17A with high affinity without the need for IL17RA. Upon binding of IL17F homodimer triggers downstream activation of TRAF6 and NF-kappa-B signaling pathway. Induces transcriptional activation of IL33, a potent cytokine that stimulates group 2 innate lymphoid cells and adaptive T-helper 2 cells involved in pulmonary allergic response to fungi. Promotes sympathetic innervation of peripheral organs by coordinating the communication between gamma-delta T cells and parenchymal cells. Stimulates sympathetic innervation of thermogenic adipose tissue by driving TGFB1 expression. Binding of IL17A-IL17F to IL17RA-IL17RC heterodimeric receptor complex triggers homotypic interaction of IL17RA and IL17RC chains with TRAF3IP2 adapter through SEFIR domains. This leads to downstream TRAF6-mediated activation of NF-kappa-B and MAPkinase pathways ultimately resulting in transcriptional activation of cytokines, chemokines, antimicrobial peptides and matrix metalloproteinases, with potential strong immune inflammation. Primarily induces neutrophil activation and recruitment at infection and inflammatory sites. Stimulates the production of antimicrobial beta-defensins DEFB1, DEFB103A, and DEFB104A by mucosal epithelial cells, limiting the entry of microbes through the epithelial barriers. In terms of biological role, receptor for both IL17A and IL17F. Functionally, does not bind IL17A or IL17F. In Homo sapiens (Human), this protein is Interleukin-17 receptor C (IL17RC).